We begin with the raw amino-acid sequence, 104 residues long: Seminal ribonuclease (104 aa).

4 cysteine pairs are disulfide-bonded: Cys-12-Cys-70, Cys-26-Cys-81, Cys-44-Cys-96, and Cys-51-Cys-58. Residues Lys-27–Thr-31, Lys-52, and Arg-71 contribute to the substrate site.

Belongs to the pancreatic ribonuclease family. As to quaternary structure, homodimer; disulfide-linked.

The protein localises to the secreted. The catalysed reaction is an [RNA] containing cytidine + H2O = an [RNA]-3'-cytidine-3'-phosphate + a 5'-hydroxy-ribonucleotide-3'-[RNA].. It catalyses the reaction an [RNA] containing uridine + H2O = an [RNA]-3'-uridine-3'-phosphate + a 5'-hydroxy-ribonucleotide-3'-[RNA].. This chain is Seminal ribonuclease (SRN), found in Saiga tatarica (Saiga antelope).